Reading from the N-terminus, the 821-residue chain is Epidermal growth factor receptor kinase substrate 8 (821 aa).

Composition is skewed to polar residues over residues 1–10 and 17–28; these read MNGHMSNRSS and SQLNGYGSSPPY. Residues 1 to 39 are disordered; the sequence is MNGHMSNRSSGYGVYPSQLNGYGSSPPYSQMDREHSSRT. Phosphoserine is present on serine 58. A PTB domain is found at 64–194; it reads QYRVEHLTTF…SDSKGGKQKR (131 aa). Disordered stretches follow at residues 204 to 224, 295 to 320, and 461 to 525; these read KADPGIPPPPRAPAPVPPGTV, SELSKRKKSKKSKRKGPGEGVLTLRA, and ANAE…RNYD. Pro residues predominate over residues 208-221; the sequence is GIPPPPRAPAPVPP. Threonine 223 is modified (phosphothreonine). The span at 299–309 shows a compositional bias: basic residues; sequence KRKKSKKSKRK. Threonine 317 is subject to Phosphothreonine. A compositionally biased stretch (basic and acidic residues) spans 464 to 476; it reads EHQRKQDSKRLST. Serine 475 is modified (phosphoserine). The 60-residue stretch at 530–589 folds into the SH3 domain; it reads QPKKYAKSKYDFVARNSSELSVMKDDVLEILDDRRQWWKVRNASGDSGFVPNNILDIMRT. Residues 610 to 683 form a disordered region; that stretch reads TEYGLRSADT…YKQLPVDRRK (74 aa). A compositionally biased stretch (pro residues) spans 622-641; the sequence is APSPPPTPAPVPVPLPPSVP. Serine 624 carries the post-translational modification Phosphoserine; by MAPK. The residue at position 628 (threonine 628) is a Phosphothreonine; by MAPK. Residues 642-651 are compositionally biased toward low complexity; that stretch reads APVSVPKVPA. The tract at residues 648-821 is effector region; it reads KVPANVTRQN…VESFDEGSSH (174 aa). Phosphoserine is present on residues serine 658 and serine 661. The segment covering 670–683 has biased composition (basic and acidic residues); the sequence is DSQRYKQLPVDRRK. The amphipathic helix stretch occupies residues 679 to 697; that stretch reads VDRRKSQMEEVQDELFQRL. Serine 684 is modified (phosphoserine). 4 helix bundle regions span residues 717-737, 751-756, 761-766, and 765-784; these read VINITYDSSPEEVKTWLQSKG, GAQLFS, ELRSVC, and VCPEGARVFNQITVQKAALE. Residues 800–821 form a disordered region; sequence QEKISAAASDSGVESFDEGSSH. Serine 810 and serine 814 each carry phosphoserine.

Belongs to the EPS8 family. As to quaternary structure, homodimer. Part of a complex consisting of ABI1, EPS8 and SOS1. Interacts with BAIAP2. Interacts with SHB and LANCL1. Interacts with EGFR; mediates EPS8 phosphorylation. Interacts with MYO15A and WHRN. Ubiquitinated by the SCF(FBXW5) E3 ubiquitin-protein ligase complex during G2 phase, leading to its transient degradation and subsequent cell shape changes required to allow mitotic progression. Reappears at the midzone of dividing cells. Post-translationally, phosphorylation at Ser-624 and Thr-628 by MAPK following BDNF treatment promotes removal from actin and filopodia formation. Phosphorylated by several receptor tyrosine kinases. As to expression, expressed in neuronal cell body and neurites, and prominently enriched in the axonal growth cone. Expressed at the tips of cochlear hair cells stereocilia.

The protein resides in the cytoplasm. It localises to the cell cortex. It is found in the cell projection. The protein localises to the ruffle membrane. Its subcellular location is the growth cone. The protein resides in the stereocilium. It localises to the synapse. It is found in the synaptosome. Its function is as follows. Signaling adapter that controls various cellular protrusions by regulating actin cytoskeleton dynamics and architecture. Depending on its association with other signal transducers, can regulate different processes. Together with SOS1 and ABI1, forms a trimeric complex that participates in transduction of signals from Ras to Rac by activating the Rac-specific guanine nucleotide exchange factor (GEF) activity. Acts as a direct regulator of actin dynamics by binding actin filaments and has both barbed-end actin filament capping and actin bundling activities depending on the context. Displays barbed-end actin capping activity when associated with ABI1, thereby regulating actin-based motility process: capping activity is auto-inhibited and inhibition is relieved upon ABI1 interaction. Also shows actin bundling activity when associated with BAIAP2, enhancing BAIAP2-dependent membrane extensions and promoting filopodial protrusions. Involved in the regulation of processes such as axonal filopodia growth, stereocilia length, dendritic cell migration and cancer cell migration and invasion. Acts as a regulator of axonal filopodia formation in neurons: in the absence of neurotrophic factors, negatively regulates axonal filopodia formation via actin-capping activity. In contrast, it is phosphorylated in the presence of BDNF leading to inhibition of its actin-capping activity and stimulation of filopodia formation. Component of a complex with WHRN and MYO15A that localizes at stereocilia tips and is required for elongation of the stereocilia actin core. Indirectly involved in cell cycle progression; its degradation following ubiquitination being required during G2 phase to promote cell shape changes. The chain is Epidermal growth factor receptor kinase substrate 8 (Eps8) from Mus musculus (Mouse).